A 397-amino-acid polypeptide reads, in one-letter code: Phosphoglycerate kinase (397 aa).

Substrate-binding positions include 21-23, R37, 60-63, R119, and R152; these read DFN and HLGR. Residues K203, G294, E325, and 354 to 357 contribute to the ATP site; that span reads GGDS.

The protein belongs to the phosphoglycerate kinase family. In terms of assembly, monomer.

It localises to the cytoplasm. The enzyme catalyses (2R)-3-phosphoglycerate + ATP = (2R)-3-phospho-glyceroyl phosphate + ADP. Its pathway is carbohydrate degradation; glycolysis; pyruvate from D-glyceraldehyde 3-phosphate: step 2/5. The polypeptide is Phosphoglycerate kinase (Chlorobium phaeovibrioides (strain DSM 265 / 1930) (Prosthecochloris vibrioformis (strain DSM 265))).